Consider the following 258-residue polypeptide: Large ribosomal subunit protein eL8z (258 aa).

Residues 1 to 20 are disordered; it reads MAPKRGGRAPVPAKKKTEKV.

This sequence belongs to the eukaryotic ribosomal protein eL8 family.

The chain is Large ribosomal subunit protein eL8z (RPL7A-1) from Oryza sativa subsp. japonica (Rice).